The chain runs to 86 residues: Neurotoxin 3FTx-LT (86 aa).

A signal peptide spans 1-21 (MKTLLLTLVVVTIVCLDLGYT). 5 disulfide bridges follow: Cys-24-Cys-45, Cys-27-Cys-32, Cys-38-Cys-63, Cys-67-Cys-78, and Cys-79-Cys-84.

In terms of tissue distribution, expressed by the venom gland.

It is found in the secreted. Functionally, binds with low affinity to muscular (alpha-1-beta-1-delta-epsilon/CHRNA1-CHRNB1-CHRND-CHRNE) and very low affinity to neuronal (alpha-7/CHRNA7) nicotinic acetylcholine receptor (nAChR). In Bungarus fasciatus (Banded krait), this protein is Neurotoxin 3FTx-LT.